Consider the following 448-residue polypeptide: MSYSVLEALRNNPDYVKKVLTARRLDTSLVDKFLELDKKWRQLKKEVDELRHVYNQLSKEGAKAPPERRREIVEKARELAAKLENLEKEVEKIEREREDLLWSFPNLIHDSVPICPEGVDSIPVRYGGVVKVAKDAVGTLKDVEYVIVDKLPIGHADMAEVVLGMVDTLKAGEVAGSRFYYLLDDLVWLDFALAMYAMDRLAQKGFRPIIPPYMLKFDVIKRVLDFDTFRDAIYKIEGEDLYLIATAEHGIAAYLYKRELVEDELPLLFVGWSPCFRKEAGAGSRDLKGIFRVHIFHKVEQFVFSLPEDSWRWHEEITKNTEELIKDLGLPYRVVNICAHDLGAPAAKKYDIEVWYPAQSMYRELASCSNVTDWQSYRLGIRVTRKGMRREFVHTLNCTGLATTRTITAILENFQREDGVVEIPKVLRPYLEPIKAAPKDYIYPKKRS.

246-248 (TAE) lines the L-serine pocket. ATP is bound by residues 277 to 279 (RKE) and Val293. Glu300 contributes to the L-serine binding site. ATP is bound at residue 364-367 (ELAS). An L-serine-binding site is contributed by Thr399.

The protein belongs to the class-II aminoacyl-tRNA synthetase family. Type-1 seryl-tRNA synthetase subfamily. Homodimer. The tRNA molecule binds across the dimer.

The protein resides in the cytoplasm. The enzyme catalyses tRNA(Ser) + L-serine + ATP = L-seryl-tRNA(Ser) + AMP + diphosphate + H(+). The catalysed reaction is tRNA(Sec) + L-serine + ATP = L-seryl-tRNA(Sec) + AMP + diphosphate + H(+). Its pathway is aminoacyl-tRNA biosynthesis; selenocysteinyl-tRNA(Sec) biosynthesis; L-seryl-tRNA(Sec) from L-serine and tRNA(Sec): step 1/1. Functionally, catalyzes the attachment of serine to tRNA(Ser). Is also able to aminoacylate tRNA(Sec) with serine, to form the misacylated tRNA L-seryl-tRNA(Sec), which will be further converted into selenocysteinyl-tRNA(Sec). The sequence is that of Serine--tRNA ligase from Pyrobaculum islandicum (strain DSM 4184 / JCM 9189 / GEO3).